A 227-amino-acid polypeptide reads, in one-letter code: Cytochrome c oxidase subunit 2 (227 aa).

Topologically, residues 1–14 are mitochondrial intermembrane; the sequence is MAYPFQLGFQDATS. A helical transmembrane segment spans residues 15-45; that stretch reads PIMEELLHFHDHTLMIVFLISSLVLYIISLM. The Mitochondrial matrix segment spans residues 46 to 59; it reads LTTKLTHTSTMDAQ. Residues 60-87 traverse the membrane as a helical segment; that stretch reads EVETIWTILPAIILILIALPSLRILYMM. Residues 88–227 lie on the Mitochondrial intermembrane side of the membrane; the sequence is DEINNPSLTV…HFEKWSASML (140 aa). 6 residues coordinate Cu cation: histidine 161, cysteine 196, glutamate 198, cysteine 200, histidine 204, and methionine 207. A Mg(2+)-binding site is contributed by glutamate 198.

This sequence belongs to the cytochrome c oxidase subunit 2 family. Component of the cytochrome c oxidase (complex IV, CIV), a multisubunit enzyme composed of 14 subunits. The complex is composed of a catalytic core of 3 subunits MT-CO1, MT-CO2 and MT-CO3, encoded in the mitochondrial DNA, and 11 supernumerary subunits COX4I, COX5A, COX5B, COX6A, COX6B, COX6C, COX7A, COX7B, COX7C, COX8 and NDUFA4, which are encoded in the nuclear genome. The complex exists as a monomer or a dimer and forms supercomplexes (SCs) in the inner mitochondrial membrane with NADH-ubiquinone oxidoreductase (complex I, CI) and ubiquinol-cytochrome c oxidoreductase (cytochrome b-c1 complex, complex III, CIII), resulting in different assemblies (supercomplex SCI(1)III(2)IV(1) and megacomplex MCI(2)III(2)IV(2)). Found in a complex with TMEM177, COA6, COX18, COX20, SCO1 and SCO2. Interacts with TMEM177 in a COX20-dependent manner. Interacts with COX20. Interacts with COX16. The cofactor is Cu cation.

Its subcellular location is the mitochondrion inner membrane. The catalysed reaction is 4 Fe(II)-[cytochrome c] + O2 + 8 H(+)(in) = 4 Fe(III)-[cytochrome c] + 2 H2O + 4 H(+)(out). Functionally, component of the cytochrome c oxidase, the last enzyme in the mitochondrial electron transport chain which drives oxidative phosphorylation. The respiratory chain contains 3 multisubunit complexes succinate dehydrogenase (complex II, CII), ubiquinol-cytochrome c oxidoreductase (cytochrome b-c1 complex, complex III, CIII) and cytochrome c oxidase (complex IV, CIV), that cooperate to transfer electrons derived from NADH and succinate to molecular oxygen, creating an electrochemical gradient over the inner membrane that drives transmembrane transport and the ATP synthase. Cytochrome c oxidase is the component of the respiratory chain that catalyzes the reduction of oxygen to water. Electrons originating from reduced cytochrome c in the intermembrane space (IMS) are transferred via the dinuclear copper A center (CU(A)) of subunit 2 and heme A of subunit 1 to the active site in subunit 1, a binuclear center (BNC) formed by heme A3 and copper B (CU(B)). The BNC reduces molecular oxygen to 2 water molecules using 4 electrons from cytochrome c in the IMS and 4 protons from the mitochondrial matrix. The sequence is that of Cytochrome c oxidase subunit 2 (MT-CO2) from Ceratotherium simum (White rhinoceros).